The sequence spans 349 residues: 4-hydroxy-2-oxovalerate aldolase 1 (349 aa).

A Pyruvate carboxyltransferase domain is found at Ile-9–Gln-261. Arg-17 to Asp-18 is a substrate binding site. Residue Asp-18 participates in Mn(2+) binding. His-21 functions as the Proton acceptor in the catalytic mechanism. Positions 171 and 200 each coordinate substrate. Mn(2+)-binding residues include His-200 and His-202. Tyr-291 provides a ligand contact to substrate.

This sequence belongs to the 4-hydroxy-2-oxovalerate aldolase family.

The enzyme catalyses (S)-4-hydroxy-2-oxopentanoate = acetaldehyde + pyruvate. The polypeptide is 4-hydroxy-2-oxovalerate aldolase 1 (Methylibium petroleiphilum (strain ATCC BAA-1232 / LMG 22953 / PM1)).